Consider the following 345-residue polypeptide: NADPH-dependent curcumin reductase (345 aa).

Positions 1–10 (MGQQKQRNRR) are enriched in basic residues. A disordered region spans residues 1 to 24 (MGQQKQRNRRWVLASRPHGAPVPE). NADP(+)-binding residues include Lys186, Asn225, and Asn333.

As to quaternary structure, homodimer.

The catalysed reaction is tetrahydrocurcumin + 2 NADP(+) = curcumin + 2 NADPH + 2 H(+). It carries out the reaction tetrahydrocurcumin + NADP(+) = dihydrocurcumin + NADPH + H(+). It catalyses the reaction dihydrocurcumin + NADP(+) = curcumin + NADPH + H(+). Its activity is regulated as follows. Inhibited by thiol-specific reagents (p-chloromercuribenzoate and 5,5'-dithio-bis-2-nitrobenzoate). In terms of biological role, catalyzes the metal-independent reduction of curcumin to dihydrocurcumin (DHC) as an intermediate product, followed by further reduction to tetrahydrocurcumin (THC) as an end product. It also acts on 3-octene-2-one, 3-hepten-2-one, resveratrol, and trans-2-octenal. This chain is NADPH-dependent curcumin reductase, found in Escherichia coli (strain K12).